We begin with the raw amino-acid sequence, 1194 residues long: Immunoglobulin superfamily member 3 (1194 aa).

Positions 1–19 are cleaved as a signal peptide; sequence MKCFFPVLSCLAVLGVVSA. Ig-like C2-type domains follow at residues 20-138, 143-262, 276-386, 401-539, 545-661, 676-803, 813-945, and 949-1097; these read QRQV…AKMN, PDSL…WYAM, PTDK…KTVT, PIVV…VSIT, FAVT…WTRL, PVTK…EEVS, PDSR…TAVT, and PDAA…YRLT. Residues 20–1124 lie on the Extracellular side of the membrane; the sequence is QRQVTVQEGP…LQSLICSNDA (1105 aa). 2 cysteine pairs are disulfide-bonded: cysteine 42–cysteine 120 and cysteine 167–cysteine 246. The N-linked (GlcNAc...) asparagine glycan is linked to asparagine 43. The EWI motif signature appears at 250–252; that stretch reads EWI. Residues cysteine 302 and cysteine 376 are joined by a disulfide bond. Residue asparagine 418 is glycosylated (N-linked (GlcNAc...) asparagine). Intrachain disulfides connect cysteine 432–cysteine 511, cysteine 566–cysteine 645, cysteine 701–cysteine 782, cysteine 838–cysteine 918, and cysteine 974–cysteine 1080. Residue asparagine 842 is glycosylated (N-linked (GlcNAc...) asparagine). Positions 997 to 1030 are disordered; the sequence is GGGKRGSLGIDEQEEEEEEEDISQEEDSEDPTER. Positions 1007–1026 are enriched in acidic residues; sequence DEQEEEEEEEDISQEEDSED. Asparagine 1077 is a glycosylation site (N-linked (GlcNAc...) asparagine). Residues 1125–1145 traverse the membrane as a helical segment; it reads LFYFVFFYPFPIFGILIITIL. Residues 1146 to 1194 are Cytoplasmic-facing; sequence LVRFKSRNSSKNSEGKNGVPLLWIKEPHLNYSPTCLEPPVLSIHPGAID.

Expressed in the lacrimal duct and lacrimal gland.

It localises to the membrane. The sequence is that of Immunoglobulin superfamily member 3 (Igsf3) from Mus musculus (Mouse).